A 470-amino-acid polypeptide reads, in one-letter code: Putative bifunctional phosphatase/peptidyl-prolyl cis-trans isomerase (470 aa).

D22 serves as the catalytic Nucleophile. 3 residues coordinate Mg(2+): D22, D24, and D221. One can recognise a PPIase cyclophilin-type domain in the interval 286–468 (TGPKVTIKTN…EDVIIETIEV (183 aa)).

It in the C-terminal section; belongs to the cyclophilin-type PPIase family. PPIL1 subfamily. It depends on Mg(2+) as a cofactor.

It carries out the reaction [protein]-peptidylproline (omega=180) = [protein]-peptidylproline (omega=0). Functionally, PPIases accelerate the folding of proteins. It catalyzes the cis-trans isomerization of proline imidic peptide bonds in oligopeptides. The chain is Putative bifunctional phosphatase/peptidyl-prolyl cis-trans isomerase from Streptococcus pyogenes serotype M6 (strain ATCC BAA-946 / MGAS10394).